The following is a 338-amino-acid chain: Heat-inducible transcription repressor HrcA (338 aa).

Belongs to the HrcA family.

In terms of biological role, negative regulator of class I heat shock genes (grpE-dnaK-dnaJ and groELS operons). Prevents heat-shock induction of these operons. In Bacillus cereus (strain B4264), this protein is Heat-inducible transcription repressor HrcA.